Here is a 115-residue protein sequence, read N- to C-terminus: Probable K(+)/H(+) antiporter subunit C (115 aa).

The next 3 membrane-spanning stretches (helical) occupy residues 4 to 21 (ILSA…YLLL), 28 to 47 (VIIG…FGMG), and 75 to 97 (ALVL…VLLA).

This sequence belongs to the CPA3 antiporters (TC 2.A.63) subunit C family. May form a hetero-oligomeric complex that consists of six subunits: PhaAB, PhaC, PhaD, PhaE, PhaF and PhaG.

It localises to the cell membrane. Part of a K(+) efflux system which is required for the adaptation of R.meliloti to alkaline pH as well as for the infection process during symbiotic nodule development. This Rhizobium meliloti (strain 1021) (Ensifer meliloti) protein is Probable K(+)/H(+) antiporter subunit C (phaC).